Consider the following 922-residue polypeptide: Coronin-7 (922 aa).

WD repeat units follow at residues 75–115 (CHSD…EALP), 124–163 (PEEL…PLTE), 166–205 (AHKD…QASQ), and 209–253 (AHEN…SALA). Residues 419-467 (DTDLSEGFSSPSSLMSPSTPSSLGPSLSSTSGIGTSPSQRSLQSLLGPS) form a disordered region. Positions 427-456 (SSPSSLMSPSTPSSLGPSLSSTSGIGTSPS) are enriched in low complexity. 2 positions are modified to phosphoserine: Ser-459 and Ser-462. Lys-469 participates in a covalent cross-link: Glycyl lysine isopeptide (Lys-Gly) (interchain with G-Cter in ubiquitin). WD repeat units lie at residues 539-581 (QNGT…NVLT), 589-629 (GHTE…ERLK), 632-671 (GHQD…LPLQ), and 725-765 (DVAP…PFFL). Residues 858–922 (GMTPVSQAPR…FEGVDEDEWD (65 aa)) form a disordered region. Residues 881-893 (LEEKSDQQKKEEL) are compositionally biased toward basic and acidic residues. Position 912 is a phosphoserine (Ser-912).

This sequence belongs to the WD repeat coronin family. As to quaternary structure, interacts with clathrin adapter AP1 complex. This interaction takes place at Golgi membranes and not AP1-positive endosomal membranes. Interacts (when ubiquitinated at Lys-469) with EPS15. Post-translationally, the membrane-associated form is phosphorylated on tyrosine residues. In terms of processing, ubiquitinated via 'Lys-33'-linked ubiquitin chains by the BCR(KLHL20) E3 ubiquitin ligase complex: 'Lys-33'-linked ubiquitination promotes interaction with EPS15 and facilitates actin polymerization at the trans-Golgi network, thereby facilitating post-Golgi trafficking. Deubiquitinated by ZRANB1/TRABID. As to expression, in the adult, widely expressed with highest levels in brain, thymus and kidney and low levels in skeletal and heart muscle. Not expressed in lung. In the eye, strongly expressed in the outer plexiform layer of the retina. In the intestine, expressed both in terminally differentiated epithelial cells and in crypt epithelium. In the embryo, strongest expression is seen in brain, thymus, intestine, apical epidermal layers of the skin and developing lens fibers of the eye.

The protein resides in the golgi apparatus membrane. The protein localises to the golgi apparatus. It is found in the trans-Golgi network. It localises to the cytoplasmic vesicle. Its subcellular location is the cytoplasm. The protein resides in the cytosol. Functionally, F-actin regulator involved in anterograde Golgi to endosome transport: upon ubiquitination via 'Lys-33'-linked ubiquitin chains by the BCR(KLHL20) E3 ubiquitin ligase complex, interacts with EPS15 and localizes to the trans-Golgi network, where it promotes actin polymerization, thereby facilitating post-Golgi trafficking. May play a role in the maintenance of the Golgi apparatus morphology. The polypeptide is Coronin-7 (Coro7) (Mus musculus (Mouse)).